We begin with the raw amino-acid sequence, 147 residues long: Small ribosomal subunit protein uS12 (147 aa).

This sequence belongs to the universal ribosomal protein uS12 family. As to quaternary structure, part of the 30S ribosomal subunit.

Functionally, with S4 and S5 plays an important role in translational accuracy. Located at the interface of the 30S and 50S subunits. The polypeptide is Small ribosomal subunit protein uS12 (Methanococcus maripaludis (strain DSM 14266 / JCM 13030 / NBRC 101832 / S2 / LL)).